The sequence spans 394 residues: Elongation factor Tu (394 aa).

Positions 10–204 (KPHVNVGTIG…ALDTYIPEPE (195 aa)) constitute a tr-type G domain. Positions 19 to 26 (GHVDHGKT) are G1. 19–26 (GHVDHGKT) serves as a coordination point for GTP. Thr-26 serves as a coordination point for Mg(2+). The interval 60-64 (GITIN) is G2. The tract at residues 81 to 84 (DCPG) is G3. GTP is bound by residues 81–85 (DCPGH) and 136–139 (NKCD). Residues 136 to 139 (NKCD) are G4. A G5 region spans residues 174 to 176 (SAL).

It belongs to the TRAFAC class translation factor GTPase superfamily. Classic translation factor GTPase family. EF-Tu/EF-1A subfamily. Monomer.

The protein resides in the cytoplasm. It catalyses the reaction GTP + H2O = GDP + phosphate + H(+). In terms of biological role, GTP hydrolase that promotes the GTP-dependent binding of aminoacyl-tRNA to the A-site of ribosomes during protein biosynthesis. The chain is Elongation factor Tu from Shewanella pealeana (strain ATCC 700345 / ANG-SQ1).